Consider the following 150-residue polypeptide: Catabolic 3-dehydroquinase 1 (150 aa).

Catalysis depends on tyrosine 24, which acts as the Proton acceptor. The substrate site is built by asparagine 75, histidine 81, and aspartate 88. Histidine 101 (proton donor) is an active-site residue. Residues 102–103 (VS) and arginine 112 each bind substrate.

It belongs to the type-II 3-dehydroquinase family. As to quaternary structure, homododecamer. Adopts a ring-like structure, composed of an arrangement of two hexameric rings stacked on top of one another.

It carries out the reaction 3-dehydroquinate = 3-dehydroshikimate + H2O. The protein operates within aromatic compound metabolism; 3,4-dihydroxybenzoate biosynthesis; 3,4-dihydroxybenzoate from 3-dehydroquinate: step 1/2. Is involved in the catabolism of quinate. Allows the utilization of quinate as carbon source via the beta-ketoadipate pathway. The chain is Catabolic 3-dehydroquinase 1 from Neosartorya fischeri (strain ATCC 1020 / DSM 3700 / CBS 544.65 / FGSC A1164 / JCM 1740 / NRRL 181 / WB 181) (Aspergillus fischerianus).